A 305-amino-acid polypeptide reads, in one-letter code: Dihydroorotate dehydrogenase B (NAD(+)), catalytic subunit (305 aa).

Residues S23 and K47–G48 each bind FMN. Residues K47 and N71–L75 each bind substrate. 2 residues coordinate FMN: N101 and N129. N129 is a binding site for substrate. C132 (nucleophile) is an active-site residue. FMN contacts are provided by K167 and I193. N194 to T195 is a substrate binding site. FMN contacts are provided by residues G219, G245–G246, and G267–T268.

Belongs to the dihydroorotate dehydrogenase family. Type 1 subfamily. In terms of assembly, heterotetramer of 2 PyrK and 2 PyrD type B subunits. It depends on FMN as a cofactor.

The protein resides in the cytoplasm. It carries out the reaction (S)-dihydroorotate + NAD(+) = orotate + NADH + H(+). It participates in pyrimidine metabolism; UMP biosynthesis via de novo pathway; orotate from (S)-dihydroorotate (NAD(+) route): step 1/1. Its function is as follows. Catalyzes the conversion of dihydroorotate to orotate with NAD(+) as electron acceptor. The sequence is that of Dihydroorotate dehydrogenase B (NAD(+)), catalytic subunit (pyrD) from Geotalea daltonii (strain DSM 22248 / JCM 15807 / FRC-32) (Geobacter daltonii).